A 575-amino-acid chain; its full sequence is Major outer membrane protein MspA (575 aa).

A signal peptide spans 1–19 (MKKALVFFVALAMIGSVFA).

The protein resides in the cell outer membrane. Its function is as follows. Major component of the outer membrane sheath. The protein is Major outer membrane protein MspA (mspA) of Treponema maltophilum.